The following is a 110-amino-acid chain: UPF0102 protein Abu_0255 (110 aa).

The protein belongs to the UPF0102 family.

The polypeptide is UPF0102 protein Abu_0255 (Aliarcobacter butzleri (strain RM4018) (Arcobacter butzleri)).